Consider the following 333-residue polypeptide: Fructose-1,6-bisphosphatase class 1 (333 aa).

Mg(2+) is bound by residues glutamate 92, aspartate 113, leucine 115, and aspartate 116. Residues 116 to 119 (DGSS), asparagine 209, tyrosine 242, and lysine 272 contribute to the substrate site. Glutamate 278 is a Mg(2+) binding site.

The protein belongs to the FBPase class 1 family. In terms of assembly, homotetramer. Requires Mg(2+) as cofactor.

It is found in the cytoplasm. The catalysed reaction is beta-D-fructose 1,6-bisphosphate + H2O = beta-D-fructose 6-phosphate + phosphate. Its pathway is carbohydrate biosynthesis; Calvin cycle. The chain is Fructose-1,6-bisphosphatase class 1 from Chlorobium luteolum (strain DSM 273 / BCRC 81028 / 2530) (Pelodictyon luteolum).